A 443-amino-acid chain; its full sequence is MKIGIINTKIRTVFSAFACMIAASLVCTMPARAVVEININKGVIEPLPIAITDFLSADQLGSNITSVIAADLERSGLFAPIDKGAFIEKISNPDAAPRFEDWKVINAQALVTGRITKQPDGRLKAEFHLWDTFGGQQMIGQQFFTTPDNWRRVAHIIADAIYERLTGDKGYFDTRVVFVDESGPAQKRVKRLAIMDQDGANVRFISDGRALSLTPRFSPNRQEVTYMSFEGGSPKVYLLQLETGQRELVGNFPGMTIAPRFSPDGQKVVMSLLQDDGSANIYTMDLRNRTTTRLTSSQAIDTGASYSPDGSQIVFTSDRGGRPQLYVMGADGSNPRRISMGDGSYSTPVWSPRGDLIAFTKQSQGQFSIGVMKTDGSGERLLTSGFHNEGPTWAPNGRVLMFFRKAAGAGGPKLFTIDLTGRNERQIQTPNFASDPAWSPLLE.

A signal peptide spans 1–33 (MKIGIINTKIRTVFSAFACMIAASLVCTMPARA).

This sequence belongs to the TolB family. As to quaternary structure, the Tol-Pal system is composed of five core proteins: the inner membrane proteins TolA, TolQ and TolR, the periplasmic protein TolB and the outer membrane protein Pal. They form a network linking the inner and outer membranes and the peptidoglycan layer.

Its subcellular location is the periplasm. Functionally, part of the Tol-Pal system, which plays a role in outer membrane invagination during cell division and is important for maintaining outer membrane integrity. The chain is Tol-Pal system protein TolB from Brucella suis biovar 1 (strain 1330).